A 417-amino-acid polypeptide reads, in one-letter code: 3-isopropylmalate dehydratase large subunit 2 (417 aa).

Cys-298, Cys-358, and Cys-361 together coordinate [4Fe-4S] cluster.

It belongs to the aconitase/IPM isomerase family. LeuC type 2 subfamily. As to quaternary structure, heterodimer of LeuC and LeuD. [4Fe-4S] cluster serves as cofactor.

It carries out the reaction (2R,3S)-3-isopropylmalate = (2S)-2-isopropylmalate. Its pathway is amino-acid biosynthesis; L-leucine biosynthesis; L-leucine from 3-methyl-2-oxobutanoate: step 2/4. Functionally, catalyzes the isomerization between 2-isopropylmalate and 3-isopropylmalate, via the formation of 2-isopropylmaleate. This Thermotoga maritima (strain ATCC 43589 / DSM 3109 / JCM 10099 / NBRC 100826 / MSB8) protein is 3-isopropylmalate dehydratase large subunit 2.